The sequence spans 129 residues: Large ribosomal subunit protein bL17 (129 aa).

It belongs to the bacterial ribosomal protein bL17 family. As to quaternary structure, part of the 50S ribosomal subunit. Contacts protein L32.

The chain is Large ribosomal subunit protein bL17 from Pasteurella multocida (strain Pm70).